The primary structure comprises 83 residues: Small ribosomal subunit protein bS16 (83 aa).

Belongs to the bacterial ribosomal protein bS16 family.

This chain is Small ribosomal subunit protein bS16, found in Acidovorax ebreus (strain TPSY) (Diaphorobacter sp. (strain TPSY)).